Here is a 468-residue protein sequence, read N- to C-terminus: MSKQQIGVVGMAVMGRNLALNIESRGYTVSIFNRSREKTEEVIAENPGKKLAPYYTVKEFVESLETPRRILLMVKAGAGTDAAIDSLKPYLDKGDIIIDGGNTFFQDTIRRNRELSAEGFNFIGTGVSGGEEGALKGPSIMPGGQKEAYELVAPILTKIAAVAEDGEPCVTYIGADGAGHYVKMVHNGIEYGDMQLIAEAYSLLKGGLNLSNEELAQTFTEWNNGELSSYLIDITKDIFTKKDEDGNYLVDVILDEAANKGTGKWTSQSALDLGEPLSLITESVFARYISSLKDQRVAASKVLSGPQAQSAGDKAEFIEKVRSALYLGKIVSYAQGFSQLRAASEEYNWDLNYGEIAKIFRAGCIIRAQFLQKITDAYAENPQIANLLLAPYFKQIADDYQQALRDVVAYAVQNGIPVPTFAAAVAYYDSYRAAVLPANLIQAQRDYFGAHTYKRIDKEGVFHTEWLD.

NADP(+) contacts are provided by residues 10–15, 33–35, 74–76, and N102; these read GMAVMG, NRS, and VKA. Residues N102 and 128 to 130 each bind substrate; that span reads SGG. Residue K183 is the Proton acceptor of the active site. 186–187 provides a ligand contact to substrate; sequence HN. The active-site Proton donor is the E190. 5 residues coordinate substrate: Y191, K260, R287, R445, and H451.

It belongs to the 6-phosphogluconate dehydrogenase family. In terms of assembly, homodimer.

The enzyme catalyses 6-phospho-D-gluconate + NADP(+) = D-ribulose 5-phosphate + CO2 + NADPH. The protein operates within carbohydrate degradation; pentose phosphate pathway; D-ribulose 5-phosphate from D-glucose 6-phosphate (oxidative stage): step 3/3. Catalyzes the oxidative decarboxylation of 6-phosphogluconate to ribulose 5-phosphate and CO(2), with concomitant reduction of NADP to NADPH. This Shigella flexneri protein is 6-phosphogluconate dehydrogenase, decarboxylating (gnd).